Reading from the N-terminus, the 192-residue chain is Nucleotidase CA_C3379 (192 aa).

Belongs to the 5'(3')-deoxyribonucleotidase family. The cofactor is Mg(2+).

The catalysed reaction is sugar phosphate + H2O = sugar + phosphate.. In terms of biological role, catalyzes the dephosphorylation of nucleotide monophosphates and of different sugar phosphates in vitro. In Clostridium acetobutylicum (strain ATCC 824 / DSM 792 / JCM 1419 / IAM 19013 / LMG 5710 / NBRC 13948 / NRRL B-527 / VKM B-1787 / 2291 / W), this protein is Nucleotidase CA_C3379.